A 213-amino-acid chain; its full sequence is Thiamine-phosphate synthase (213 aa).

4-amino-2-methyl-5-(diphosphooxymethyl)pyrimidine is bound by residues 40-44 (QFREK) and N75. D76 and D95 together coordinate Mg(2+). S113 serves as a coordination point for 4-amino-2-methyl-5-(diphosphooxymethyl)pyrimidine. A 2-[(2R,5Z)-2-carboxy-4-methylthiazol-5(2H)-ylidene]ethyl phosphate-binding site is contributed by 139–141 (TPS). K142 is a 4-amino-2-methyl-5-(diphosphooxymethyl)pyrimidine binding site. 2-[(2R,5Z)-2-carboxy-4-methylthiazol-5(2H)-ylidene]ethyl phosphate is bound by residues G171 and 191-192 (IS).

It belongs to the thiamine-phosphate synthase family. Mg(2+) is required as a cofactor.

The enzyme catalyses 2-[(2R,5Z)-2-carboxy-4-methylthiazol-5(2H)-ylidene]ethyl phosphate + 4-amino-2-methyl-5-(diphosphooxymethyl)pyrimidine + 2 H(+) = thiamine phosphate + CO2 + diphosphate. It catalyses the reaction 2-(2-carboxy-4-methylthiazol-5-yl)ethyl phosphate + 4-amino-2-methyl-5-(diphosphooxymethyl)pyrimidine + 2 H(+) = thiamine phosphate + CO2 + diphosphate. The catalysed reaction is 4-methyl-5-(2-phosphooxyethyl)-thiazole + 4-amino-2-methyl-5-(diphosphooxymethyl)pyrimidine + H(+) = thiamine phosphate + diphosphate. It participates in cofactor biosynthesis; thiamine diphosphate biosynthesis; thiamine phosphate from 4-amino-2-methyl-5-diphosphomethylpyrimidine and 4-methyl-5-(2-phosphoethyl)-thiazole: step 1/1. Its function is as follows. Condenses 4-methyl-5-(beta-hydroxyethyl)thiazole monophosphate (THZ-P) and 2-methyl-4-amino-5-hydroxymethyl pyrimidine pyrophosphate (HMP-PP) to form thiamine monophosphate (TMP). The chain is Thiamine-phosphate synthase from Staphylococcus aureus (strain MRSA252).